The following is a 226-amino-acid chain: Thioredoxin domain-containing protein 9 (226 aa).

The Thioredoxin domain maps to 52 to 180 (LEALKKAQQQ…TTETLEWRLG (129 aa)). Phosphoserine is present on residues S188, S221, and S223.

Forms ternary complexes with the chaperonin TCP1 complex, spanning the cylindrical chaperonin cavity and contacting at least 2 subunits.

It localises to the cytoplasm. The protein resides in the nucleus. It is found in the cytoskeleton. The protein localises to the microtubule organizing center. Its subcellular location is the centrosome. It localises to the midbody. Functionally, significantly diminishes the chaperonin TCP1 complex ATPase activity, thus negatively impacts protein folding, including that of actin or tubulin. The polypeptide is Thioredoxin domain-containing protein 9 (TXNDC9) (Bos taurus (Bovine)).